The sequence spans 371 residues: 4-hydroxyphenylpyruvate dioxygenase-like protein (371 aa).

VOC domains follow at residues 7 to 135 (RLCH…LLQR) and 160 to 328 (HVDH…VFTK). The Fe cation site is built by His-163, His-258, and Glu-339.

This sequence belongs to the 4HPPD family. It depends on Fe cation as a cofactor.

The protein localises to the mitochondrion. It catalyses the reaction 3-(4-hydroxyphenyl)pyruvate + O2 = (S)-4-hydroxymandelate + CO2. Iron-dependent dioxygenase that catalyzes the conversion of 4-hydroxyphenylpyruvate (4-HPPA) to 4-hydroxymandelate (4-HMA) in the mitochondria, one of the steps in the biosynthesis of coenzyme Q10 from tyrosine. The sequence is that of 4-hydroxyphenylpyruvate dioxygenase-like protein from Rattus norvegicus (Rat).